Here is a 181-residue protein sequence, read N- to C-terminus: Prepronociceptin (181 aa).

The signal sequence occupies residues 1 to 19 (MKILFCDVLLLSLLSSVFS). Positions 20-95 (SCPEDCLTCQ…QSKASEMQHL (76 aa)) are excised as a propeptide. The interval 103 to 125 (SVVQARDAEPEADAEPVADEADE) is disordered. 2 tandem repeats follow at residues 109-114 (DAEPEA) and 115-120 (DAEPVA). The interval 109-120 (DAEPEADAEPVA) is 2 X 6 AA tandem repeats of D-A-E-P-X-A. The span at 112 to 125 (PEADAEPVADEADE) shows a compositional bias: acidic residues. Positions 174–181 (TLHQNGNV) are excised as a propeptide.

It belongs to the opioid neuropeptide precursor family. Post-translationally, specific enzymatic cleavages at paired basic residues probably yield other active peptides besides nociceptin. The N-terminal domain contains 6 conserved cysteines thought to be involved in disulfide bonding and/or processing. In terms of tissue distribution, expressed predominantly in the spinal cord and brain, being more abundant in the hypothalamus and striatum. Also found in small amounts in ovary.

Its subcellular location is the secreted. Its function is as follows. Ligand of the opioid receptor-like receptor OPRL1. It may act as a transmitter in the brain by modulating nociceptive and locomotor behavior. May be involved in neuronal differentiation and development. Blocks nociceptin action in pain transmission by inhibiting nociceptin-induced hyperalgesia and allodynia. In terms of biological role, has potent analgesic activity. The sequence is that of Prepronociceptin (Pnoc) from Rattus norvegicus (Rat).